A 1131-amino-acid chain; its full sequence is Tyrosine-protein kinase JAK2 (1131 aa).

Residues 1-239 (MGMACLTMTE…RYRFRRFIEQ (239 aa)) form an interaction with cytokine/interferon/growth hormone receptors region. The region spanning 37–380 (PVLQVYLYHS…GYYRLTADAH (344 aa)) is the FERM domain. Position 119 is a phosphotyrosine; by autocatalysis (Y119). Y372 and Y373 each carry phosphotyrosine. Residues 401 to 482 (HGPISMDFAI…NLKDLLNCYQ (82 aa)) enclose the SH2; atypical domain. Phosphoserine is present on S523. The Protein kinase 1 domain occupies 545–809 (LIFNESLGQG…AIIRDLNSLF (265 aa)). Phosphotyrosine occurs at positions 570 and 813. The region spanning 849–1126 (LKFLQQLGKG…RDLALRVDQI (278 aa)) is the Protein kinase 2 domain. 855–863 (LGKGNFGSV) contributes to the ATP binding site. Y868 is subject to Phosphotyrosine; by autocatalysis. K882 lines the ATP pocket. 2 positions are modified to phosphotyrosine; by autocatalysis: Y966 and Y972. The active-site Proton acceptor is the D976. Y1007 and Y1008 each carry phosphotyrosine; by autocatalysis.

It belongs to the protein kinase superfamily. Tyr protein kinase family. JAK subfamily. As to quaternary structure, interacts with IL23R, SKB1 and STAM2. Interacts with EPOR. Interacts with LYN. Interacts with SIRPA. Interacts with SH2B1. Interacts with TEC. Interacts with IFNGR2 (via intracellular domain). Interacts with LEPR (Isoform B). Interacts with HSP90AB1; promotes functional activation in a heat shock-dependent manner. Interacts with STRA6. Interacts with ASB2; the interaction targets JAK2 for Notch-induced proteasomal degradation. The cofactor is Mg(2+). In terms of processing, autophosphorylated, leading to regulate its activity. Leptin promotes phosphorylation on tyrosine residues, including phosphorylation on Tyr-813. Autophosphorylation on Tyr-119 in response to EPO down-regulates its kinase activity. Autophosphorylation on Tyr-868, Tyr-966 and Tyr-972 in response to growth hormone (GH) are required for maximal kinase activity. Also phosphorylated by TEC. Phosphorylated on tyrosine residues in response to interferon gamma signaling. Phosphorylated on tyrosine residues in response to a signaling cascade that is activated by increased cellular retinol. Undergoes Notch-induced ubiquitination and subsequent proteasomal degradation which is mediated by ASB1 or ASB2, the substrate-recognition components of probable ECS E3 ubiquitin-protein ligase complexes.

The protein localises to the endomembrane system. It is found in the cytoplasm. It localises to the nucleus. The enzyme catalyses L-tyrosyl-[protein] + ATP = O-phospho-L-tyrosyl-[protein] + ADP + H(+). Its activity is regulated as follows. Regulated by autophosphorylation, can both activate or decrease activity. Heme regulates its activity by enhancing the phosphorylation on Tyr-1007 and Tyr-1008. In terms of biological role, non-receptor tyrosine kinase involved in various processes such as cell growth, development, differentiation or histone modifications. Mediates essential signaling events in both innate and adaptive immunity. In the cytoplasm, plays a pivotal role in signal transduction via its association with type I receptors such as growth hormone (GHR), prolactin (PRLR), leptin (LEPR), erythropoietin (EPOR), thrombopoietin (THPO); or type II receptors including IFN-alpha, IFN-beta, IFN-gamma and multiple interleukins. Following ligand-binding to cell surface receptors, phosphorylates specific tyrosine residues on the cytoplasmic tails of the receptor, creating docking sites for STATs proteins. Subsequently, phosphorylates the STATs proteins once they are recruited to the receptor. Phosphorylated STATs then form homodimer or heterodimers and translocate to the nucleus to activate gene transcription. For example, cell stimulation with erythropoietin (EPO) during erythropoiesis leads to JAK2 autophosphorylation, activation, and its association with erythropoietin receptor (EPOR) that becomes phosphorylated in its cytoplasmic domain. Then, STAT5 (STAT5A or STAT5B) is recruited, phosphorylated and activated by JAK2. Once activated, dimerized STAT5 translocates into the nucleus and promotes the transcription of several essential genes involved in the modulation of erythropoiesis. Part of a signaling cascade that is activated by increased cellular retinol and that leads to the activation of STAT5 (STAT5A or STAT5B). In addition, JAK2 mediates angiotensin-2-induced ARHGEF1 phosphorylation. Plays a role in cell cycle by phosphorylating CDKN1B. Cooperates with TEC through reciprocal phosphorylation to mediate cytokine-driven activation of FOS transcription. In the nucleus, plays a key role in chromatin by specifically mediating phosphorylation of 'Tyr-41' of histone H3 (H3Y41ph), a specific tag that promotes exclusion of CBX5 (HP1 alpha) from chromatin. Up-regulates the potassium voltage-gated channel activity of KCNA3. The chain is Tyrosine-protein kinase JAK2 from Sus scrofa (Pig).